The sequence spans 776 residues: Calcium-independent phospholipase A2-gamma (776 aa).

N-linked (GlcNAc...) asparagine glycans are attached at residues N4 and N157. Disordered stretches follow at residues K216–S276 and K306–A334. Basic and acidic residues-rich tracts occupy residues Q221–S239 and V247–L263. In terms of domain architecture, PNPLA spans L439–L634. The GXGXXG motif lies at G443 to G448. The helical transmembrane segment at L469–F489 threads the bilayer. The GXSXG motif lies at G475–G479. The active-site Nucleophile is the S477. D621 functions as the Proton acceptor in the catalytic mechanism. Positions D621–G623 match the DGA/G motif. The residue at position 730 (K730) is an N6-succinyllysine.

Expressed in myocardium (at protein level).

It is found in the endoplasmic reticulum membrane. Its subcellular location is the mitochondrion membrane. The protein resides in the peroxisome membrane. The enzyme catalyses a 1,2-diacyl-sn-glycero-3-phosphocholine + H2O = a 1-acyl-sn-glycero-3-phosphocholine + a fatty acid + H(+). It carries out the reaction a 1,2-diacyl-sn-glycero-3-phosphocholine + H2O = a 2-acyl-sn-glycero-3-phosphocholine + a fatty acid + H(+). The catalysed reaction is a 1,2-diacyl-sn-glycero-3-phosphoethanolamine + H2O = a 1-acyl-sn-glycero-3-phosphoethanolamine + a fatty acid + H(+). It catalyses the reaction a 1-O-(1Z-alkenyl)-2-acyl-sn-glycero-3-phosphocholine + H2O = a 1-O-(1Z-alkenyl)-sn-glycero-3-phosphocholine + a fatty acid + H(+). The enzyme catalyses a 1-acyl-sn-glycero-3-phosphocholine + H2O = sn-glycerol 3-phosphocholine + a fatty acid + H(+). It carries out the reaction 1-hexadecanoyl-2-(5Z,8Z,11Z,14Z-eicosatetraenoyl)-sn-glycero-3-phosphocholine + H2O = 2-(5Z,8Z,11Z,14Z)-eicosatetraenoyl-sn-glycero-3-phosphocholine + hexadecanoate + H(+). The catalysed reaction is 1-acyl-2-(9Z,12Z)-octadecadienoyl-sn-glycero-3-phosphocholine + H2O = a 1-acyl-sn-glycero-3-phosphocholine + (9Z,12Z)-octadecadienoate + H(+). It catalyses the reaction 1-acyl-2-(5Z,8Z,11Z,14Z-eicosatetraenoyl)-sn-glycero-3-phosphocholine + H2O = a 1-acyl-sn-glycero-3-phosphocholine + (5Z,8Z,11Z,14Z)-eicosatetraenoate + H(+). The enzyme catalyses 1-hexadecanoyl-2-(5Z,8Z,11Z,14Z-eicosatetraenoyl)-sn-glycero-3-phosphocholine + H2O = 1-hexadecanoyl-sn-glycero-3-phosphocholine + (5Z,8Z,11Z,14Z)-eicosatetraenoate + H(+). It carries out the reaction 1-octadecanoyl-2-(9Z-octadecenoyl)-sn-glycero-3-phosphocholine + H2O = 1-octadecanoyl-sn-glycero-3-phosphocholine + (9Z)-octadecenoate + H(+). The catalysed reaction is 1-hexadecanoyl-2-(9Z-octadecenoyl)-sn-glycero-3-phosphocholine + H2O = 1-hexadecanoyl-sn-glycero-3-phosphocholine + (9Z)-octadecenoate + H(+). It catalyses the reaction 1-hexadecanoyl-2-(9Z,12Z-octadecadienoyl)-sn-glycero-3-phosphocholine + H2O = (9Z,12Z)-octadecadienoate + 1-hexadecanoyl-sn-glycero-3-phosphocholine + H(+). The enzyme catalyses 1-acyl-2-(9Z,12Z)-octadecadienoyl-sn-glycero-3-phosphoethanolamine + H2O = a 1-acyl-sn-glycero-3-phosphoethanolamine + (9Z,12Z)-octadecadienoate + H(+). It carries out the reaction 1-acyl-2-(5Z,8Z,11Z,14Z)-eicosatetraenoyl-sn-glycero-3-phosphoethanolamine + H2O = a 1-acyl-sn-glycero-3-phosphoethanolamine + (5Z,8Z,11Z,14Z)-eicosatetraenoate + H(+). The catalysed reaction is 1-hexadecanoyl-2-(5Z,8Z,11Z,14Z-eicosatetraenoyl)-sn-glycero-3-phosphoethanolamine + H2O = 1-hexadecanoyl-sn-glycero-3-phosphoethanolamine + (5Z,8Z,11Z,14Z)-eicosatetraenoate + H(+). It catalyses the reaction 1-octadecanoyl-2-(9Z-octadecenoyl)-sn-glycero-3-phosphocholine + H2O = 2-(9Z-octadecenoyl)-sn-glycero-3-phosphocholine + octadecanoate + H(+). The enzyme catalyses 1-hexadecanoyl-2-(4Z,7Z,10Z,13Z,16Z,19Z-docosahexaenoyl)-sn-glycero-3-phosphocholine + H2O = 2-(4Z,7Z,10Z,13Z,16Z,19Z-docosahexaenoyl)-sn-glycero-3-phosphocholine + hexadecanoate + H(+). It carries out the reaction 1-O-(1Z)-hexadecenyl-2 (5Z,8Z,11Z,14Z)-eicosatetraenoyl-sn-glycero-3-phosphocholine + H2O = 1-(1Z-hexadecenyl)-sn-glycero-3-phosphocholine + (5Z,8Z,11Z,14Z)-eicosatetraenoate + H(+). The catalysed reaction is 1-O-(1Z-hexadecenyl)-2-(9Z-octadecenoyl)-sn-glycero-3-phosphocholine + H2O = 1-(1Z-hexadecenyl)-sn-glycero-3-phosphocholine + (9Z)-octadecenoate + H(+). It catalyses the reaction 1-hexadecanoyl-sn-glycero-3-phosphocholine + H2O = sn-glycerol 3-phosphocholine + hexadecanoate + H(+). The enzyme catalyses 1',3'-bis-[1,2-di-(9Z,12Z-octadecadienoyl)-sn-glycero-3-phospho]-glycerol + H2O = 1'-[1,2-di-(9Z,12Z-octadecadienoyl)-sn-glycero-3-phospho]-3'-[1-(9Z,12Z-octadecadienoyl)-sn-glycero-3-phospho]-glycerol + (9Z,12Z)-octadecadienoate + H(+). It carries out the reaction 1'-[1-acyl-2-(9-hydroxy-(10E,12Z)-octadecadienoyl)-sn-glycero-3-phospho]-3'-[1,2-diacyl-sn-glycero-3-phospho]-glycerol + H2O = 9-hydroxy-(10E,12Z)-octadecadienoate + 1'-[1,2-diacyl-sn-glycero-3-phospho],3'-[1-acyl-sn-glycero-3-phospho]-glycerol + H(+). It participates in phospholipid metabolism. With respect to regulation, calcium-independent phospholipase. Functionally, calcium-independent and membrane-bound phospholipase, that catalyzes the esterolytic cleavage of fatty acids from glycerophospholipids to yield free fatty acids and lysophospholipids, hence regulating membrane physical properties and the release of lipid second messengers and growth factors. Hydrolyzes phosphatidylethanolamine, phosphatidylcholine and probably phosphatidylinositol with a possible preference for the former. Also has a broad substrate specificity in terms of fatty acid moieties, hydrolyzing saturated and mono-unsaturated fatty acids at nearly equal rates from either the sn-1 or sn-2 position in diacyl phosphatidylcholine. However, has a weak activity toward polyunsaturated fatty acids at the sn-2 position, and thereby favors the production of 2-arachidonoyl lysophosphatidylcholine, a key branch point metabolite in eicosanoid signaling. On the other hand, can produce arachidonic acid from the sn-1 position of diacyl phospholipid and from the sn-2 position of arachidonate-containing plasmalogen substrates. Therefore, plays an important role in the mobilization of arachidonic acid in response to cellular stimuli and the generation of lipid second messengers. Can also hydrolyze lysophosphatidylcholine. In the mitochondrial compartment, catalyzes the hydrolysis and release of oxidized aliphatic chains from cardiolipin and integrates mitochondrial bioenergetics and signaling. It is essential for maintaining efficient bioenergetic mitochondrial function through tailoring mitochondrial membrane lipid metabolism and composition. In Mus musculus (Mouse), this protein is Calcium-independent phospholipase A2-gamma.